A 93-amino-acid chain; its full sequence is Antitoxin RelF (93 aa).

This sequence belongs to the phD/YefM antitoxin family. Interacts with toxin RelG, which neutralizes the toxin. Also interacts with toxins RelE and RelK in vitro, in M.smegmatis coexpression with non-cognate toxins increases the toxicity of RelE but not of RelK.

Its function is as follows. Antitoxin component of a type II toxin-antitoxin (TA) system. Upon expression in M.smegmatis neutralizes the effect of toxin RelE2. In terms of biological role, induces its own promoter, in combination with RelG represses its own promoter. Has been seen to bind DNA in complex with toxin RelG but not alone. The sequence is that of Antitoxin RelF (relF) from Mycobacterium tuberculosis (strain ATCC 25618 / H37Rv).